Here is a 37-residue protein sequence, read N- to C-terminus: Large ribosomal subunit protein bL36c (37 aa).

This sequence belongs to the bacterial ribosomal protein bL36 family.

The protein resides in the plastid. It is found in the chloroplast. In Phaeodactylum tricornutum (strain CCAP 1055/1), this protein is Large ribosomal subunit protein bL36c.